Consider the following 121-residue polypeptide: Flagellar protein FliT (121 aa).

Positions 1–50 (MNHAPHLYFAWQQLVEKSQLMLRLATEEQWDELIASEMAYVNAVQEIAHL) are required for homodimerization. The interval 60–98 (MQEQLRPMLRLILDNESKVKQLLQIRMDELAKLVGQSSV) is fliD binding.

Belongs to the FliT family. In terms of assembly, homodimer. Interacts with FliD and FlhC.

Its subcellular location is the cytoplasm. The protein resides in the cytosol. Its function is as follows. Dual-function protein that regulates the transcription of class 2 flagellar operons and that also acts as an export chaperone for the filament-capping protein FliD. As a transcriptional regulator, acts as an anti-FlhDC factor; it directly binds FlhC, thus inhibiting the binding of the FlhC/FlhD complex to class 2 promoters, resulting in decreased expression of class 2 flagellar operons. As a chaperone, effects FliD transition to the membrane by preventing its premature polymerization, and by directing it to the export apparatus. The protein is Flagellar protein FliT of Escherichia coli O8 (strain IAI1).